Here is a 341-residue protein sequence, read N- to C-terminus: Vacuolar morphogenesis protein 7 homolog (341 aa).

Positions 1-115 (MALKIKIPET…KFLNIKDESE (115 aa)) constitute a PX domain. The segment covering 214–233 (NSPVAPPSASSQLNSSNPSS) has biased composition (low complexity). The tract at residues 214–265 (NSPVAPPSASSQLNSSNPSSPFRPLSASTDKQSNTSLNRVLGKNRMPETQTT) is disordered. Residues 239 to 251 (SASTDKQSNTSLN) are compositionally biased toward polar residues. One can recognise a t-SNARE coiled-coil homology domain in the interval 278-340 (NQTMEDQDMQ…HRTRAGLRKL (63 aa)).

In terms of assembly, possibly multimeric.

It localises to the vacuole. Essential for proper morphogenesis of the vacuole. May exist as structural reinforcement on the surface of the vacuolar membrane and be required for maintenance against rupture by osmotic pressure. This is Vacuolar morphogenesis protein 7 homolog from Schizosaccharomyces pombe (strain 972 / ATCC 24843) (Fission yeast).